The sequence spans 261 residues: Hemin import ATP-binding protein HmuV (261 aa).

The ABC transporter domain occupies 2 to 243 (LCANNVSAQI…ALLKRVYNIN (242 aa)). Position 34-41 (34-41 (GPNGAGKS)) interacts with ATP.

This sequence belongs to the ABC transporter superfamily. Heme (hemin) importer (TC 3.A.1.14.5) family. As to quaternary structure, the complex is composed of two ATP-binding proteins (HmuV), two transmembrane proteins (HmuU) and a solute-binding protein (HmuT).

The protein resides in the cell inner membrane. Functionally, part of the ABC transporter complex HmuTUV involved in hemin import. Responsible for energy coupling to the transport system. In Pseudoalteromonas translucida (strain TAC 125), this protein is Hemin import ATP-binding protein HmuV.